A 320-amino-acid polypeptide reads, in one-letter code: Malate dehydrogenase 2 (320 aa).

Residues 10–15 (GAGQIG) and Asp-34 each bind NAD(+). Residues Arg-83 and Arg-89 each contribute to the substrate site. NAD(+)-binding positions include Asn-96 and 119–121 (ITN). Substrate is bound by residues Asn-121 and Arg-152. Catalysis depends on His-176, which acts as the Proton acceptor.

The protein belongs to the LDH/MDH superfamily. MDH type 3 family.

It carries out the reaction (S)-malate + NAD(+) = oxaloacetate + NADH + H(+). Catalyzes the reversible oxidation of malate to oxaloacetate. This chain is Malate dehydrogenase 2, found in Rhodopseudomonas palustris (strain BisB18).